Consider the following 304-residue polypeptide: MTRQMILAVGQQGPIARAETREQVVVRLLYMLTKAASRGANFIVFPELAFTTFFPRWHFTDEAELDSFYETEMPGPVVRPLFEKAAELGIGFNLGYAELVVEGGVKRRFNTSILVDKPGKIVGKYRKIHLPGHKEYEAYRPFQHLEKRYFEPGDLGFPVYDVDAAKMGMFICNDRRWPEAWRVMGLRGAEIICGGYNTPTHNPPVPQHDHLTSFHHLLSMQAGSYQNGAWSAAAGKVGMEENCMLLGHSCIVAPTGEIVALTTTLEDEVITAAVCLDRCRELREHIFNFKQHRQPQHYGLIAEL.

The 272-residue stretch at 5–276 folds into the CN hydrolase domain; sequence MILAVGQQGP…DEVITAAVCL (272 aa). Residues E47, K127, and C172 contribute to the active site.

Homotetramer.

It catalyses the reaction an N-carbamoyl-D-amino acid + H2O + 2 H(+) = a D-alpha-amino acid + NH4(+) + CO2. Its activity is regulated as follows. The activity decreases with increasing concentration of H(2)O(2). Has 68% and 43% of activity remaining upon treatment with 0.1 and 0.2 mM H(2)O(2) for 30 minutes, respectively. Inhibited significantly by 2 mM Zn(2+), Cu(2+) and Ag(+), moderately by Co(2+), Mn(2+), Sn(2+) and Mg(2+), and only slightly by Ba(2+). Slightly activated by Fe(2+) and Ca(2+). No effect on activity by metal chelators EDTA and 8-hydroxyquinoline at 2 mM or by dithiothreitol, 2-mercaptoethanol or phenylmethanesulfonyl fluoride. Catalyzes the hydrolysis of N-carbamoyl-D-amino acids to the corresponding D-amino acids. Hydrolyzes aromatic and aliphatic N-carbamoyl-D-amino acids in vitro. Effectively hydrolyzes N-carbamoyl-D-p-hydroxyphenylglycine and N-carbamoyl-DL-p-hydroxyphenylglycine, and to a lesser extent N-carbamoyl-D-methionine. No activity for N-carbamoyl-L-amino acids, N-carbamoyl-beta-alanine or (RS)-alpha-ethyl-N-carbamoylphenylglycine in vitro. This Ensifer adhaerens (Sinorhizobium morelense) protein is N-carbamoyl-D-amino acid hydrolase.